A 101-amino-acid chain; its full sequence is Cilia- and flagella-associated protein 141 (101 aa).

Microtubule inner protein component of sperm flagellar doublet microtubules.

It localises to the cytoplasm. It is found in the cytoskeleton. The protein resides in the cilium axoneme. The protein localises to the flagellum axoneme. Its function is as follows. Microtubule inner protein (MIP) part of the dynein-decorated doublet microtubules (DMTs) in cilia axoneme, which is required for motile cilia beating. In Mus musculus (Mouse), this protein is Cilia- and flagella-associated protein 141.